Consider the following 184-residue polypeptide: Thymidine kinase (184 aa).

ATP-binding positions include 15-22 (GPMFSGKS) and 89-92 (DEIQ). The active-site Proton acceptor is Glu-90. The Zn(2+) site is built by Cys-146, Cys-149, Cys-178, and Cys-181.

This sequence belongs to the thymidine kinase family. Homotetramer.

It localises to the cytoplasm. It catalyses the reaction thymidine + ATP = dTMP + ADP + H(+). This Mesomycoplasma hyopneumoniae (strain 232) (Mycoplasma hyopneumoniae) protein is Thymidine kinase.